Reading from the N-terminus, the 865-residue chain is DNA mismatch repair protein MutS (865 aa).

609-616 (GPNMAGKS) lines the ATP pocket.

The protein belongs to the DNA mismatch repair MutS family.

Its function is as follows. This protein is involved in the repair of mismatches in DNA. It is possible that it carries out the mismatch recognition step. This protein has a weak ATPase activity. In Leuconostoc citreum (strain KM20), this protein is DNA mismatch repair protein MutS.